Here is a 122-residue protein sequence, read N- to C-terminus: Large ribosomal subunit protein uL14c (122 aa).

This sequence belongs to the universal ribosomal protein uL14 family. As to quaternary structure, part of the 50S ribosomal subunit.

The protein localises to the plastid. It is found in the chloroplast. Its function is as follows. Binds to 23S rRNA. In Daucus carota (Wild carrot), this protein is Large ribosomal subunit protein uL14c.